A 163-amino-acid polypeptide reads, in one-letter code: Protein-export protein SecB (163 aa).

The protein belongs to the SecB family. As to quaternary structure, homotetramer, a dimer of dimers. One homotetramer interacts with 1 SecA dimer.

It localises to the cytoplasm. Functionally, one of the proteins required for the normal export of preproteins out of the cell cytoplasm. It is a molecular chaperone that binds to a subset of precursor proteins, maintaining them in a translocation-competent state. It also specifically binds to its receptor SecA. This Brucella canis (strain ATCC 23365 / NCTC 10854 / RM-666) protein is Protein-export protein SecB.